The primary structure comprises 221 residues: Deoxyribose-phosphate aldolase (221 aa).

The Proton donor/acceptor role is filled by Asp96. Catalysis depends on Lys157, which acts as the Schiff-base intermediate with acetaldehyde. The Proton donor/acceptor role is filled by Lys185.

The protein belongs to the DeoC/FbaB aldolase family. DeoC type 1 subfamily.

It localises to the cytoplasm. The catalysed reaction is 2-deoxy-D-ribose 5-phosphate = D-glyceraldehyde 3-phosphate + acetaldehyde. Its pathway is carbohydrate degradation; 2-deoxy-D-ribose 1-phosphate degradation; D-glyceraldehyde 3-phosphate and acetaldehyde from 2-deoxy-alpha-D-ribose 1-phosphate: step 2/2. Catalyzes a reversible aldol reaction between acetaldehyde and D-glyceraldehyde 3-phosphate to generate 2-deoxy-D-ribose 5-phosphate. The protein is Deoxyribose-phosphate aldolase of Crocosphaera subtropica (strain ATCC 51142 / BH68) (Cyanothece sp. (strain ATCC 51142)).